The following is a 635-amino-acid chain: MHGLLLAAGLLTLPLRALAHPGHQSTSILSRRGAVDLDAYRVSAKAEYSNVNDVAENPPAVSLMSSGSYVDIATELVKTTLPGVTFRVVNDHYVGTNGVAHVHFRQTIHGVDVDNADFNVNVKDGKVFSFGNGFYKGEIPKENPMVKRDFSDPVHALKGACNALKIPIKTNKVSVKSGKGQESVVFKGTSGALSEPKGDLVYFVKPDGKLSLTWRVETDVGDNWLSSYVDAKDSSKIHGVTDYVADATFQVYPWGLNDPTEGSRQTLTDPWERNASEFTWHSDGNTRYPTTRGNNGIAQDNPSGGTGYLNNYRPQSSALRFEYPYSTSMSPPTSYKDASITQLFYTANTFHDLTYLLGFTERAGNFEVNNNNQGGRGNDFVILNAQDGSGVNNANFATPPDGQPGRMRMYTWNRSQPNRDGCFEAGIVIHEYAHGLSNRLCGGPANSRCLSALESGGMGEGWGDFLATAIRLKANDTRRTSYTMGEWASNQRGGIRQYPYSTSTTTNPLVYTTVNRYNRVHDIGTVWATMLYEVLWNLIDKHGKNDGPRPEFRNGVPTDGKYLTMKLVIDGMALMPCNPNFVQARDAIIDADEALTGGQNKCEIWAGFAKRQLGTGARYGRTNRVGSTEVPSECR.

An N-terminal signal peptide occupies residues 1–19 (MHGLLLAAGLLTLPLRALA). Residues 20 to 246 (HPGHQSTSIL…IHGVTDYVAD (227 aa)) constitute a propeptide that is removed on maturation. Asn274 carries an N-linked (GlcNAc...) asparagine glycan. Residues 279–307 (TWHSDGNTRYPTTRGNNGIAQDNPSGGTG) are disordered. Residue Asn413 is glycosylated (N-linked (GlcNAc...) asparagine). Residue His430 coordinates Zn(2+). The active site involves Glu431. Zn(2+) is bound at residue His434. Residue Asn475 is glycosylated (N-linked (GlcNAc...) asparagine).

Belongs to the peptidase M36 family. Zn(2+) is required as a cofactor.

It is found in the secreted. Its function is as follows. Secreted metalloproteinase that allows assimilation of proteinaceous substrates. This is Extracellular metalloproteinase 9 (MEP9) from Uncinocarpus reesii (strain UAMH 1704).